The following is a 183-amino-acid chain: Translation initiation factor IF-3 (183 aa).

This sequence belongs to the IF-3 family. In terms of assembly, monomer.

It localises to the cytoplasm. Its function is as follows. IF-3 binds to the 30S ribosomal subunit and shifts the equilibrium between 70S ribosomes and their 50S and 30S subunits in favor of the free subunits, thus enhancing the availability of 30S subunits on which protein synthesis initiation begins. The protein is Translation initiation factor IF-3 of Pseudomonas fluorescens (strain SBW25).